The primary structure comprises 154 residues: MSHIRLTQVLIHNNPSSFNSPFIFDISFECVSPIKEDLEWKVIYVGSADNEKNDQVLDSILLGPVAVGQNQFVFEVDPPDANKIPKDDLLGVTVVFLICAYKGEDFIRVGYYVNNDYFEQELKDNPPETPDLSKIQRNVMDDKPVVTGFPIQWN.

This sequence belongs to the ASF1 family.

It is found in the nucleus. In terms of biological role, histone chaperone that facilitates histone deposition and histone exchange and removal during nucleosome assembly and disassembly. Cooperates with chromatin assembly factor 1 (CAF-1) to promote replication-dependent chromatin assembly. The sequence is that of Histone chaperone asf1 (asf1) from Dictyostelium discoideum (Social amoeba).